Reading from the N-terminus, the 82-residue chain is ATP synthase subunit c, chloroplastic (82 aa).

Helical transmembrane passes span 3-23 (PLIS…ASIG) and 57-77 (FAFM…LLFA).

The protein belongs to the ATPase C chain family. F-type ATPases have 2 components, F(1) - the catalytic core - and F(0) - the membrane proton channel. F(1) has five subunits: alpha(3), beta(3), gamma(1), delta(1), epsilon(1). F(0) has four main subunits: a(1), b(1), b'(1) and c(10-14). The alpha and beta chains form an alternating ring which encloses part of the gamma chain. F(1) is attached to F(0) by a central stalk formed by the gamma and epsilon chains, while a peripheral stalk is formed by the delta, b and b' chains.

The protein resides in the plastid. Its subcellular location is the chloroplast thylakoid membrane. Its function is as follows. F(1)F(0) ATP synthase produces ATP from ADP in the presence of a proton or sodium gradient. F-type ATPases consist of two structural domains, F(1) containing the extramembraneous catalytic core and F(0) containing the membrane proton channel, linked together by a central stalk and a peripheral stalk. During catalysis, ATP synthesis in the catalytic domain of F(1) is coupled via a rotary mechanism of the central stalk subunits to proton translocation. Key component of the F(0) channel; it plays a direct role in translocation across the membrane. A homomeric c-ring of between 10-14 subunits forms the central stalk rotor element with the F(1) delta and epsilon subunits. In Mesostigma viride (Green alga), this protein is ATP synthase subunit c, chloroplastic.